A 98-amino-acid chain; its full sequence is Defensin (98 aa).

Cystine bridges form between cysteine 61-cysteine 88, cysteine 74-cysteine 94, and cysteine 78-cysteine 96.

Belongs to the invertebrate defensin family. Type 1 subfamily.

This Mamestra brassicae (Cabbage moth) protein is Defensin.